Consider the following 539-residue polypeptide: Chaperonin GroEL (539 aa).

Residues 29 to 32 (TIGP), 86 to 90 (DGTTT), G413, 476 to 478 (NAA), and D492 contribute to the ATP site.

The protein belongs to the chaperonin (HSP60) family. As to quaternary structure, forms a cylinder of 14 subunits composed of two heptameric rings stacked back-to-back. Interacts with the co-chaperonin GroES.

The protein localises to the cytoplasm. It catalyses the reaction ATP + H2O + a folded polypeptide = ADP + phosphate + an unfolded polypeptide.. In terms of biological role, together with its co-chaperonin GroES, plays an essential role in assisting protein folding. The GroEL-GroES system forms a nano-cage that allows encapsulation of the non-native substrate proteins and provides a physical environment optimized to promote and accelerate protein folding. The chain is Chaperonin GroEL from Pediococcus pentosaceus (strain ATCC 25745 / CCUG 21536 / LMG 10740 / 183-1w).